The following is a 238-amino-acid chain: Uridylate kinase (238 aa).

Residue 10–13 (KFSG) participates in ATP binding. Residues 18-23 (GENGFG) form an involved in allosteric activation by GTP region. A UMP-binding site is contributed by glycine 52. ATP contacts are provided by glycine 53 and arginine 57. UMP contacts are provided by residues aspartate 73 and 134-141 (TGNPFFTT). The ATP site is built by threonine 161, tyrosine 167, and aspartate 170.

This sequence belongs to the UMP kinase family. In terms of assembly, homohexamer.

It is found in the cytoplasm. It carries out the reaction UMP + ATP = UDP + ADP. Its pathway is pyrimidine metabolism; CTP biosynthesis via de novo pathway; UDP from UMP (UMPK route): step 1/1. Its activity is regulated as follows. Allosterically activated by GTP. Inhibited by UTP. In terms of biological role, catalyzes the reversible phosphorylation of UMP to UDP. This chain is Uridylate kinase, found in Campylobacter concisus (strain 13826).